The sequence spans 99 residues: Large ribosomal subunit protein bL21 (99 aa).

Belongs to the bacterial ribosomal protein bL21 family. As to quaternary structure, part of the 50S ribosomal subunit. Contacts protein L20.

Functionally, this protein binds to 23S rRNA in the presence of protein L20. This chain is Large ribosomal subunit protein bL21, found in Deinococcus geothermalis (strain DSM 11300 / CIP 105573 / AG-3a).